Consider the following 167-residue polypeptide: Piercer of microtubule wall 1 protein (167 aa).

Positions 1 to 54 (MSEEKPQQSAEEPEPGEPKAKPAPEEPEPGEPKAKPAPEEPEPGEPKAKPAPEK) are disordered. Residues 16 to 54 (GEPKAKPAPEEPEPGEPKAKPAPEEPEPGEPKAKPAPEK) are compositionally biased toward basic and acidic residues.

This sequence belongs to the PIERCE1 family. In terms of assembly, microtubule inner protein component of sperm flagellar doublet microtubules. Interacts with CFAP53, ODAD1 and ODAD3; the interactions link the outer dynein arms docking complex (ODA-DC) to the internal microtubule inner proteins (MIP) in cilium axoneme. As to expression, expressed in brain, lung, kidney and testis.

The protein localises to the cytoplasm. It localises to the cytoskeleton. It is found in the cilium axoneme. The protein resides in the flagellum axoneme. Its function is as follows. Microtubule inner protein involved in the attachment of outer dynein arms (ODAs) to dynein-decorated doublet microtubules (DMTs) in cilia axoneme. Functions at the initial step of left-right asymmetry specification of the visceral organs. This Mus musculus (Mouse) protein is Piercer of microtubule wall 1 protein.